A 324-amino-acid chain; its full sequence is Protein ChrB (324 aa).

Its function is as follows. Together with ChrA1, this protein reduces chromate accumulation and is essential for chromate resistance, possibly as a regulatory protein. The sequence is that of Protein ChrB from Cupriavidus metallidurans (strain ATCC 43123 / DSM 2839 / NBRC 102507 / CH34) (Ralstonia metallidurans).